The chain runs to 70 residues: MSNKMTGLVKWFNADKGFGFITPDDGSKDVFVHFTAIQSNEFRTLNENQKVEFSIEQGQRGPAAANVVTL.

One can recognise a CSD domain in the interval 7 to 67 (GLVKWFNADK…GQRGPAAANV (61 aa)).

Its subcellular location is the cytoplasm. This chain is Cold shock-like protein CspG (cspG), found in Escherichia coli O157:H7.